A 57-amino-acid chain; its full sequence is Protein translocase subunit SecE (57 aa).

Residues 30-50 (LIAGAGIVFVGFLGFLIFAIM) form a helical membrane-spanning segment.

It belongs to the SecE/SEC61-gamma family. In terms of assembly, component of the Sec protein translocase complex. Heterotrimer consisting of SecY (alpha), SecG (beta) and SecE (gamma) subunits. The heterotrimers can form oligomers, although 1 heterotrimer is thought to be able to translocate proteins. Interacts with the ribosome. May interact with SecDF, and other proteins may be involved.

The protein resides in the cell membrane. In terms of biological role, essential subunit of the Sec protein translocation channel SecYEG. Clamps together the 2 halves of SecY. May contact the channel plug during translocation. The sequence is that of Protein translocase subunit SecE from Haloquadratum walsbyi (strain DSM 16790 / HBSQ001).